We begin with the raw amino-acid sequence, 225 residues long: Octanoyltransferase (225 aa).

In terms of domain architecture, BPL/LPL catalytic spans 44–219; it reads RETPDEIWLL…NFIAQLTHRI (176 aa). Substrate contacts are provided by residues 83–90, 150–152, and 163–165; these read RGGQITYH, SLG, and GIA. C181 (acyl-thioester intermediate) is an active-site residue.

This sequence belongs to the LipB family.

It localises to the cytoplasm. The catalysed reaction is octanoyl-[ACP] + L-lysyl-[protein] = N(6)-octanoyl-L-lysyl-[protein] + holo-[ACP] + H(+). Its pathway is protein modification; protein lipoylation via endogenous pathway; protein N(6)-(lipoyl)lysine from octanoyl-[acyl-carrier-protein]: step 1/2. Functionally, catalyzes the transfer of endogenously produced octanoic acid from octanoyl-acyl-carrier-protein onto the lipoyl domains of lipoate-dependent enzymes. Lipoyl-ACP can also act as a substrate although octanoyl-ACP is likely to be the physiological substrate. This Nitrosomonas eutropha (strain DSM 101675 / C91 / Nm57) protein is Octanoyltransferase.